Consider the following 312-residue polypeptide: F-box protein At1g11270 (312 aa).

Residues 29–80 (SVVKLLLPHDVVGLILERLPVESLLRFKCVSNQWKSTIESQCFQERQLIRRM) enclose the F-box domain.

This is F-box protein At1g11270 from Arabidopsis thaliana (Mouse-ear cress).